The sequence spans 316 residues: HPr kinase/phosphorylase (316 aa).

Residues His143 and Lys164 contribute to the active site. Gly158–Ser165 contacts ATP. Ser165 provides a ligand contact to Mg(2+). The active-site Proton acceptor; for phosphorylation activity. Proton donor; for dephosphorylation activity is the Asp182. The segment at Leu206–Asn215 is important for the catalytic mechanism of both phosphorylation and dephosphorylation. Glu207 provides a ligand contact to Mg(2+). Arg251 is a catalytic residue. Positions Pro272 to Arg277 are important for the catalytic mechanism of dephosphorylation.

It belongs to the HPrK/P family. As to quaternary structure, homohexamer. It depends on Mg(2+) as a cofactor.

It catalyses the reaction [HPr protein]-L-serine + ATP = [HPr protein]-O-phospho-L-serine + ADP + H(+). The enzyme catalyses [HPr protein]-O-phospho-L-serine + phosphate + H(+) = [HPr protein]-L-serine + diphosphate. In terms of biological role, catalyzes the ATP- as well as the pyrophosphate-dependent phosphorylation of a specific serine residue in HPr, a phosphocarrier protein of the phosphoenolpyruvate-dependent sugar phosphotransferase system (PTS). HprK/P also catalyzes the pyrophosphate-producing, inorganic phosphate-dependent dephosphorylation (phosphorolysis) of seryl-phosphorylated HPr (P-Ser-HPr). The protein is HPr kinase/phosphorylase of Stenotrophomonas maltophilia (strain R551-3).